The following is a 747-amino-acid chain: Probable copper-transporting ATPase PacS (747 aa).

Residues 1 to 101 (MVNQQTLTLR…RQLAQRVWVS (101 aa)) are Cytoplasmic-facing. In terms of domain architecture, HMA spans 3 to 69 (NQQTLTLRGM…AIEAAGYHAF (67 aa)). A metal cation-binding residues include C14 and C17. The helical transmembrane segment at 102–122 (GLIASLLVIGSLPMMLGISIP) threads the bilayer. Residues 123-132 (GIPMWLHHPG) are Extracellular-facing. A helical transmembrane segment spans residues 133-151 (LQLGLTLPVLWAGRSFFIN). Residues 152 to 158 (AWKAFRQ) lie on the Cytoplasmic side of the membrane. The chain crosses the membrane as a helical span at residues 159–179 (NTATMDTLVAVGTGAAFLYSL). Topologically, residues 180–199 (AVTLFPQWLTRQGLPPDVYY) are extracellular. A helical membrane pass occupies residues 200–220 (EAIAVIIALLLLGRSLEERAK). The Cytoplasmic portion of the chain corresponds to 221 to 348 (GQTSAAIRQL…KAPIQRLADQ (128 aa)). Residues 349 to 371 (VTGWFVPAVIAIAILTFVLWFNW) form a helical membrane-spanning segment. Residues 372 to 378 (IGNVTLA) are Extracellular-facing. A helical transmembrane segment spans residues 379–396 (LITAVGVLIIACPCALGL). Topologically, residues 397–688 (ATPTSIMVGT…QLSRATMTNI (292 aa)) are cytoplasmic. The 4-aspartylphosphate intermediate role is filled by D434. Positions 634 and 638 each coordinate Mg(2+). A helical membrane pass occupies residues 689-708 (RQNLFFAFIYNVAGIPIAAG). Topologically, residues 709–720 (ILYPLLGWLLSP) are extracellular. A helical membrane pass occupies residues 721 to 739 (MLAGAAMAFSSVSVVTNAL). Topologically, residues 740–747 (RLRQFQPR) are cytoplasmic.

The protein belongs to the cation transport ATPase (P-type) (TC 3.A.3) family. Type IB subfamily.

The protein localises to the cell membrane. It carries out the reaction Cu(+)(in) + ATP + H2O = Cu(+)(out) + ADP + phosphate + H(+). Functionally, may play a role in the osmotic adaptation. In Synechococcus elongatus (strain ATCC 33912 / PCC 7942 / FACHB-805) (Anacystis nidulans R2), this protein is Probable copper-transporting ATPase PacS (pacS).